We begin with the raw amino-acid sequence, 557 residues long: Neurofilament light polypeptide (557 aa).

S2 bears the N-acetylserine mark. Positions 2–89 (SSYSYDPYYT…KIVRTQEKAQ (88 aa)) are head. Residues 86 to 396 (EKAQLQDLND…KLLEGEETRL (311 aa)) form the IF rod domain. Residues 90-121 (LQDLNDRFANFIERVHELEQRNKVLEAELLLL) are coil 1A. The segment at 122–134 (RQKHNEPSRLRDL) is linker 1. Residues 135-230 (YEQEVRELRL…KVHEEELAQL (96 aa)) are coil 1B. Residues 231–248 (QSQVQYAQISLEVEVAKP) form a linker 12 region. Residues 249 to 267 (DLSSALRDIRAQYEKLAAK) are coil 2A. Positions 268-276 (NMQSAEDWF) are linker 2. The coil 2B stretch occupies residues 277 to 392 (KSRFTVLTQS…AAYRKLLEGE (116 aa)). The segment at 393-437 (ETRLSFSGVGAITSGYTQSAPVFGRSAYSLQSSSYMTSRAFPTYY) is tail, subdomain A. Positions 393–557 (ETRLSFSGVG…KKKKKKKKKK (165 aa)) are tail. The interval 438-557 (SSHVQEEQLD…KKKKKKKKKK (120 aa)) is tail, subdomain B (acidic). A disordered region spans residues 452 to 557 (IESSRAEEAK…KKKKKKKKKK (106 aa)). Positions 453-464 (ESSRAEEAKAEA) are enriched in basic and acidic residues. The segment covering 465 to 538 (PEEEEEEAGE…GEGEEEEEGK (74 aa)) has biased composition (acidic residues). Residues 539-548 (GEEPAEEESK) are compositionally biased toward basic and acidic residues.

The protein belongs to the intermediate filament family. As to quaternary structure, forms homodimers (in vitro).

The protein localises to the cell projection. The protein resides in the axon. It localises to the cytoplasm. It is found in the cytoskeleton. Functionally, neurofilaments usually contain three intermediate filament proteins: NEFL, NEFM, and NEFH which are involved in the maintenance of neuronal caliber. May additionally cooperate with other neuronal intermediate filament proteins to form neuronal filamentous networks. The polypeptide is Neurofilament light polypeptide (nefl) (Xenopus tropicalis (Western clawed frog)).